Here is a 320-residue protein sequence, read N- to C-terminus: Endolytic peptidoglycan transglycosylase RlpA (320 aa).

This sequence belongs to the RlpA family.

Lytic transglycosylase with a strong preference for naked glycan strands that lack stem peptides. The protein is Endolytic peptidoglycan transglycosylase RlpA of Rickettsia typhi (strain ATCC VR-144 / Wilmington).